The chain runs to 83 residues: Small ribosomal subunit protein bS20 (83 aa).

Over residues 1–11 (MANHKSAAKRA) the composition is skewed to basic residues. The tract at residues 1–44 (MANHKSAAKRAKQSEARRLRNKSTRSSMNTAVKKVRTAKEAGTD) is disordered.

It belongs to the bacterial ribosomal protein bS20 family.

Binds directly to 16S ribosomal RNA. This chain is Small ribosomal subunit protein bS20, found in Desulforapulum autotrophicum (strain ATCC 43914 / DSM 3382 / VKM B-1955 / HRM2) (Desulfobacterium autotrophicum).